The primary structure comprises 280 residues: Putative protein-tyrosine sulfotransferase (280 aa).

Position 16-20 (16-20 (RSGTT)) interacts with 3'-phosphoadenylyl sulfate. Cys-34 and Cys-89 form a disulfide bridge. Glu-37 functions as the Proton donor/acceptor in the catalytic mechanism. N-linked (GlcNAc...) asparagine glycosylation occurs at Asn-57. Residues Arg-116, Ser-124, and Arg-128 each contribute to the 3'-phosphoadenylyl sulfate site. N-linked (GlcNAc...) asparagine glycosylation occurs at Asn-136. Cys-158 and Cys-165 are disulfide-bonded. Residues Tyr-170 and 215–224 (SASQVKNSIN) contribute to the 3'-phosphoadenylyl sulfate site.

The protein belongs to the protein sulfotransferase family.

It carries out the reaction L-tyrosyl-[protein] + 3'-phosphoadenylyl sulfate = O-sulfo-L-tyrosine-[protein] + adenosine 3',5'-bisphosphate + H(+). Catalyzes the O-sulfation of tyrosine residues within acidic motifs of polypeptides, using 3'-phosphoadenylyl sulfate (PAPS) as cosubstrate. In Caenorhabditis briggsae, this protein is Putative protein-tyrosine sulfotransferase.